Reading from the N-terminus, the 76-residue chain is MNVTLQSAKMIGAGLATIGLTGVGAGVGIVFGSLVMAYARNPSLKQQLFGYTILGFALTEAVALFALMMAFLILFT.

The next 2 helical transmembrane spans lie at 11–31 (IGAGLATIGLTGVGAGVGIVF) and 53–73 (ILGFALTEAVALFALMMAFLI).

It belongs to the ATPase C chain family. As to quaternary structure, F-type ATPases have 2 components, CF(1) - the catalytic core - and CF(0) - the membrane proton channel. CF(1) has five subunits: alpha(3), beta(3), gamma(1), delta(1), epsilon(1). CF(0) has three main subunits: a, b and c.

It localises to the mitochondrion membrane. This protein is one of the chains of the nonenzymatic membrane component (F0) of mitochondrial ATPase. In Chondrus crispus (Carrageen Irish moss), this protein is ATP synthase subunit 9, mitochondrial (ATP9).